Reading from the N-terminus, the 54-residue chain is Large ribosomal subunit protein bL33B (54 aa).

This sequence belongs to the bacterial ribosomal protein bL33 family.

This is Large ribosomal subunit protein bL33B from Mycobacterium sp. (strain JLS).